The chain runs to 566 residues: CTP synthase (566 aa).

Residues 1–270 (MTKFVFVTGG…DGLICDKLRL (270 aa)) are amidoligase domain. S13 lines the CTP pocket. S13 contacts UTP. Residues 14–19 (SLGKGI) and D71 each bind ATP. Residues D71 and E144 each coordinate Mg(2+). Residues 151-153 (DIE), 191-196 (KTKPTQ), and K227 each bind CTP. UTP is bound by residues 191–196 (KTKPTQ) and K227. The 253-residue stretch at 295–547 (SIAMVGKYVD…IAATLEQRSA (253 aa)) folds into the Glutamine amidotransferase type-1 domain. G356 is a binding site for L-glutamine. Catalysis depends on C383, which acts as the Nucleophile; for glutamine hydrolysis. L-glutamine contacts are provided by residues 384–387 (LGMQ), E407, and R473. Active-site residues include H520 and E522.

The protein belongs to the CTP synthase family. As to quaternary structure, homotetramer.

It catalyses the reaction UTP + L-glutamine + ATP + H2O = CTP + L-glutamate + ADP + phosphate + 2 H(+). The catalysed reaction is L-glutamine + H2O = L-glutamate + NH4(+). The enzyme catalyses UTP + NH4(+) + ATP = CTP + ADP + phosphate + 2 H(+). Its pathway is pyrimidine metabolism; CTP biosynthesis via de novo pathway; CTP from UDP: step 2/2. With respect to regulation, allosterically activated by GTP, when glutamine is the substrate; GTP has no effect on the reaction when ammonia is the substrate. The allosteric effector GTP functions by stabilizing the protein conformation that binds the tetrahedral intermediate(s) formed during glutamine hydrolysis. Inhibited by the product CTP, via allosteric rather than competitive inhibition. Its function is as follows. Catalyzes the ATP-dependent amination of UTP to CTP with either L-glutamine or ammonia as the source of nitrogen. Regulates intracellular CTP levels through interactions with the four ribonucleotide triphosphates. In Polaromonas naphthalenivorans (strain CJ2), this protein is CTP synthase.